The following is a 443-amino-acid chain: Protein SCAR (443 aa).

An interaction with brk1 and abiA region spans residues 1 to 96 (MVLITRYLPS…DYHRNTSIDT (96 aa)). Positions 166-201 (VAEQQKLHEEARQRKRERREARLKKKGEKNEVEVKK) form a coiled coil. Disordered regions lie at residues 176-197 (ARQRKRERREARLKKKGEKNEV) and 220-386 (INIE…RSDL). The span at 178-192 (QRKRERREARLKKKG) shows a compositional bias: basic residues. A compositionally biased stretch (polar residues) spans 221–252 (NIESPHTSSPQIQHQSNNTATPQHTTQHFGTN). Low complexity-rich tracts occupy residues 263 to 277 (SQSSPSQQHSPINSY) and 285 to 305 (NTSTPSPSSSFQGRPPSTGFN). The segment covering 306–323 (TPPPPMSNNNNMPPPPPM) has biased composition (pro residues). Residues 324-338 (QQNGGAANNRLSVHN) show a composition bias toward polar residues. Pro residues predominate over residues 346-365 (PAPPPPPPPPSAPAPPPPPM). One can recognise a WH2 domain in the interval 382-399 (ARSDLLSSIMQGMALKPA).

This sequence belongs to the SCAR/WAVE family. In terms of assembly, part of a Scar/WAVE complex containing brk1, scrA, abiA, pirA and napA. Interacts with brk1 and abiA.

It localises to the cytoplasm. It is found in the cytoskeleton. The protein localises to the cell projection. Its subcellular location is the pseudopodium tip. The protein resides in the filopodium tip. Its function is as follows. Involved in regulation of actin and microtubule organization. Regulates phagocytosis and macropinocytosis. The chain is Protein SCAR (scrA) from Dictyostelium discoideum (Social amoeba).